Consider the following 349-residue polypeptide: tRNA pseudouridine synthase D (349 aa).

F27 contributes to the substrate binding site. The Nucleophile role is filled by D80. Position 129 (N129) interacts with substrate. Residues G155–L303 form the TRUD domain. F329 contacts substrate.

Belongs to the pseudouridine synthase TruD family.

The enzyme catalyses uridine(13) in tRNA = pseudouridine(13) in tRNA. Its function is as follows. Responsible for synthesis of pseudouridine from uracil-13 in transfer RNAs. The protein is tRNA pseudouridine synthase D of Salmonella choleraesuis (strain SC-B67).